The following is a 413-amino-acid chain: Multifunctional CCA protein (413 aa).

Residues Gly8 and Arg11 each coordinate ATP. The CTP site is built by Gly8 and Arg11. Residues Asp21 and Asp23 each coordinate Mg(2+). Positions 91, 137, and 140 each coordinate ATP. Residues Arg91, Arg137, and Arg140 each coordinate CTP. The region spanning 228 to 329 is the HD domain; it reads TGLHTLMTVT…VKLFDSIDAW (102 aa).

The protein belongs to the tRNA nucleotidyltransferase/poly(A) polymerase family. Bacterial CCA-adding enzyme type 1 subfamily. As to quaternary structure, monomer. Can also form homodimers and oligomers. The cofactor is Mg(2+). It depends on Ni(2+) as a cofactor.

It carries out the reaction a tRNA precursor + 2 CTP + ATP = a tRNA with a 3' CCA end + 3 diphosphate. It catalyses the reaction a tRNA with a 3' CCA end + 2 CTP + ATP = a tRNA with a 3' CCACCA end + 3 diphosphate. Catalyzes the addition and repair of the essential 3'-terminal CCA sequence in tRNAs without using a nucleic acid template. Adds these three nucleotides in the order of C, C, and A to the tRNA nucleotide-73, using CTP and ATP as substrates and producing inorganic pyrophosphate. tRNA 3'-terminal CCA addition is required both for tRNA processing and repair. Also involved in tRNA surveillance by mediating tandem CCA addition to generate a CCACCA at the 3' terminus of unstable tRNAs. While stable tRNAs receive only 3'-terminal CCA, unstable tRNAs are marked with CCACCA and rapidly degraded. The chain is Multifunctional CCA protein from Klebsiella pneumoniae subsp. pneumoniae (strain ATCC 700721 / MGH 78578).